The sequence spans 150 residues: 1,4-dihydroxy-2-naphthoyl-CoA hydrolase (150 aa).

Asp22 is a catalytic residue.

The protein belongs to the 4-hydroxybenzoyl-CoA thioesterase family. DHNA-CoA hydrolase subfamily.

The enzyme catalyses 1,4-dihydroxy-2-naphthoyl-CoA + H2O = 1,4-dihydroxy-2-naphthoate + CoA + H(+). It functions in the pathway cofactor biosynthesis; phylloquinone biosynthesis. It participates in quinol/quinone metabolism; 1,4-dihydroxy-2-naphthoate biosynthesis; 1,4-dihydroxy-2-naphthoate from chorismate: step 7/7. Its function is as follows. Catalyzes the hydrolysis of 1,4-dihydroxy-2-naphthoyl-CoA (DHNA-CoA) to 1,4-dihydroxy-2-naphthoate (DHNA), a reaction involved in phylloquinone (vitamin K1) biosynthesis. This chain is 1,4-dihydroxy-2-naphthoyl-CoA hydrolase, found in Prochlorococcus marinus (strain NATL1A).